We begin with the raw amino-acid sequence, 639 residues long: 3-hydroxybenzoate 4-monooxygenase (639 aa).

FAD is bound by residues 34–64 (DVLIVGCGPAGLTLAAQLAAFPDIRTCIVEQ), Q73, V166, N212, 269–271 (RFY), Y317, D349, and S365.

This sequence belongs to the PheA/TfdB FAD monooxygenase family. Homodimer. Requires FAD as cofactor.

It carries out the reaction 3-hydroxybenzoate + NADPH + O2 + H(+) = 3,4-dihydroxybenzoate + NADP(+) + H2O. In terms of biological role, converts 3-hydroxybenzoate (m-hydroxybenzoate), and to a lesser extent p-hydroxybenzoate, to 3,4-dihydroxybenzoate (protocatechuate). Also acts on a number of analogs of 3-hydroxybenzoate substituted in the 2, 4, 5 and 6 positions. The chain is 3-hydroxybenzoate 4-monooxygenase (mobA) from Comamonas testosteroni (Pseudomonas testosteroni).